Reading from the N-terminus, the 264-residue chain is MAAAAVARLWWRGILGASALTRGTGRPSVLLLPVRRESAGADTRPTVRPRNDVAHKQLSAFGEYVAEILPKYVQQVQVSCFNELEVCIHPDGVIPVLTFLRDHTNAQFKSLVDLTAVDVPTRQNRFEIVYNLLSLRFNSRIRVKTYTDELTPIESAVSVFKAANWYEREIWDMFGVFFANHPDLRRILTDYGFEGHPFRKDFPLSGYVELRYDDEVKRVVAEPVELAQEFRKFDLNSPWEAFPVYRQPPESLKLEAGDKKPDAK.

The transit peptide at 1-36 (MAAAAVARLWWRGILGASALTRGTGRPSVLLLPVRR) directs the protein to the mitochondrion.

Belongs to the complex I 30 kDa subunit family. Core subunit of respiratory chain NADH dehydrogenase (Complex I) which is composed of 45 different subunits. Interacts with NDUFAF3. Interacts with RAB5IF. Found in subcomplexes containing subunits NDUFS2, MT-ND1 and NDUFA13.

The protein localises to the mitochondrion inner membrane. The catalysed reaction is a ubiquinone + NADH + 5 H(+)(in) = a ubiquinol + NAD(+) + 4 H(+)(out). Its function is as follows. Core subunit of the mitochondrial membrane respiratory chain NADH dehydrogenase (Complex I) which catalyzes electron transfer from NADH through the respiratory chain, using ubiquinone as an electron acceptor. Essential for the catalytic activity and assembly of complex I. This Homo sapiens (Human) protein is NADH dehydrogenase [ubiquinone] iron-sulfur protein 3, mitochondrial (NDUFS3).